A 354-amino-acid polypeptide reads, in one-letter code: Methionine import ATP-binding protein MetN (354 aa).

The region spanning 8–250 is the ABC transporter domain; sequence LDHIDITFRQ…PKEALTQEFI (243 aa). Position 42–49 (42–49) interacts with ATP; that stretch reads GYSGAGKS.

It belongs to the ABC transporter superfamily. Methionine importer (TC 3.A.1.24) family. In terms of assembly, the complex is composed of two ATP-binding proteins (MetN), two transmembrane proteins (MetI) and a solute-binding protein (MetQ).

The protein resides in the cell membrane. It catalyses the reaction L-methionine(out) + ATP + H2O = L-methionine(in) + ADP + phosphate + H(+). It carries out the reaction D-methionine(out) + ATP + H2O = D-methionine(in) + ADP + phosphate + H(+). Functionally, part of the ABC transporter complex MetNIQ involved in methionine import. Responsible for energy coupling to the transport system. The sequence is that of Methionine import ATP-binding protein MetN from Streptococcus pyogenes serotype M1.